Here is a 160-residue protein sequence, read N- to C-terminus: Seed allergenic protein RA5 (160 aa).

The N-terminal stretch at 1–26 (MASNKVVFSVLLLAVVSVLAATATMA) is a signal peptide. Intrachain disulfides connect Cys42-Cys92, Cys56-Cys80, Cys64-Cys124, Cys81-Cys140, and Cys94-Cys152.

Belongs to the protease inhibitor I6 (cereal trypsin/alpha-amylase inhibitor) family. Post-translationally, five disulfide bonds are present.

It localises to the secreted. In terms of biological role, seed storage protein. The polypeptide is Seed allergenic protein RA5 (RA5) (Oryza sativa subsp. japonica (Rice)).